We begin with the raw amino-acid sequence, 441 residues long: BTB/POZ domain-containing protein At4g30940 (441 aa).

The BTB domain maps to 6–74 (DRIKFNVGGR…LRTGDLNIPP (69 aa)).

It participates in protein modification; protein ubiquitination. May act as a substrate-specific adapter of an E3 ubiquitin-protein ligase complex (CUL3-RBX1-BTB) which mediates the ubiquitination and subsequent proteasomal degradation of target proteins. In Arabidopsis thaliana (Mouse-ear cress), this protein is BTB/POZ domain-containing protein At4g30940.